A 215-amino-acid chain; its full sequence is Large ribosomal subunit protein uL4 (215 aa).

Residues 46–72 form a disordered region; the sequence is TAKSKNRAEVSGGGRKPWAQKGGGRAR. Gly residues predominate over residues 56-71; it reads SGGGRKPWAQKGGGRA.

It belongs to the universal ribosomal protein uL4 family. Part of the 50S ribosomal subunit.

Its function is as follows. One of the primary rRNA binding proteins, this protein initially binds near the 5'-end of the 23S rRNA. It is important during the early stages of 50S assembly. It makes multiple contacts with different domains of the 23S rRNA in the assembled 50S subunit and ribosome. Forms part of the polypeptide exit tunnel. This chain is Large ribosomal subunit protein uL4, found in Helicobacter pylori (strain Shi470).